The sequence spans 166 residues: Transcriptional repressor NrdR (166 aa).

A zinc finger spans residues 3–34; the sequence is CPHCHHNGSRVVDSRPTDDGRVIRRRRECESC. The 91-residue stretch at 49–139 folds into the ATP-cone domain; it reads LLVIKKNGTR…VYRQFKDTGV (91 aa).

It belongs to the NrdR family. Requires Zn(2+) as cofactor.

Negatively regulates transcription of bacterial ribonucleotide reductase nrd genes and operons by binding to NrdR-boxes. The sequence is that of Transcriptional repressor NrdR from Levilactobacillus brevis (strain ATCC 367 / BCRC 12310 / CIP 105137 / JCM 1170 / LMG 11437 / NCIMB 947 / NCTC 947) (Lactobacillus brevis).